We begin with the raw amino-acid sequence, 178 residues long: CDP-archaeol synthase (178 aa).

The next 5 helical transmembrane spans lie at 3-23 (IIYLVINSFIFILPAYVANAT), 55-75 (TFFGLFCGTITAILEGIIFNL), 91-111 (GIVGLLLSAGALFGDAIGSFI), 125-145 (ILDQLGFIVFALLFVYPFAPV), and 149-169 (MGIFLLVITPMIHLSANIIAY).

The protein belongs to the CDP-archaeol synthase family. Mg(2+) serves as cofactor.

The protein resides in the cell membrane. It carries out the reaction 2,3-bis-O-(geranylgeranyl)-sn-glycerol 1-phosphate + CTP + H(+) = CDP-2,3-bis-O-(geranylgeranyl)-sn-glycerol + diphosphate. It functions in the pathway membrane lipid metabolism; glycerophospholipid metabolism. Catalyzes the formation of CDP-2,3-bis-(O-geranylgeranyl)-sn-glycerol (CDP-archaeol) from 2,3-bis-(O-geranylgeranyl)-sn-glycerol 1-phosphate (DGGGP) and CTP. This reaction is the third ether-bond-formation step in the biosynthesis of archaeal membrane lipids. The protein is CDP-archaeol synthase of Methanococcus aeolicus (strain ATCC BAA-1280 / DSM 17508 / OCM 812 / Nankai-3).